Reading from the N-terminus, the 475-residue chain is Dihydrolipoyl dehydrogenase (475 aa).

FAD-binding positions include 36 to 45 (ERYNTLGGVC), lysine 54, and glycine 117. Cysteine 45 and cysteine 50 are disulfide-bonded. NAD(+) contacts are provided by residues 182-186 (GGGII), glutamate 205, valine 238, and 270-273 (AIGR). Residues aspartate 313 and alanine 321 each coordinate FAD. The Proton acceptor role is filled by histidine 445.

This sequence belongs to the class-I pyridine nucleotide-disulfide oxidoreductase family. The cofactor is FAD.

It localises to the cytoplasm. The catalysed reaction is N(6)-[(R)-dihydrolipoyl]-L-lysyl-[protein] + NAD(+) = N(6)-[(R)-lipoyl]-L-lysyl-[protein] + NADH + H(+). In terms of biological role, the branched-chain alpha-keto dehydrogenase complex catalyzes the overall conversion of alpha-keto acids to acyl-CoA and CO(2). It contains multiple copies of 3 enzymatic components: branched-chain alpha-keto acid decarboxylase (E1), lipoamide acyltransferase (E2) and lipoamide dehydrogenase (E3). The chain is Dihydrolipoyl dehydrogenase (lpd) from Vibrio cholerae serotype O1 (strain ATCC 39315 / El Tor Inaba N16961).